The primary structure comprises 557 residues: Dihydroxy-acid dehydratase (557 aa).

Cys-50 contacts [2Fe-2S] cluster. Residue Asp-82 participates in Mg(2+) binding. Residue Cys-123 coordinates [2Fe-2S] cluster. Mg(2+)-binding residues include Asp-124 and Lys-125. N6-carboxylysine is present on Lys-125. A [2Fe-2S] cluster-binding site is contributed by Cys-195. Position 447 (Glu-447) interacts with Mg(2+). Residue Ser-473 is the Proton acceptor of the active site.

It belongs to the IlvD/Edd family. As to quaternary structure, homodimer. The cofactor is [2Fe-2S] cluster. Mg(2+) serves as cofactor.

It catalyses the reaction (2R)-2,3-dihydroxy-3-methylbutanoate = 3-methyl-2-oxobutanoate + H2O. The catalysed reaction is (2R,3R)-2,3-dihydroxy-3-methylpentanoate = (S)-3-methyl-2-oxopentanoate + H2O. Its pathway is amino-acid biosynthesis; L-isoleucine biosynthesis; L-isoleucine from 2-oxobutanoate: step 3/4. It participates in amino-acid biosynthesis; L-valine biosynthesis; L-valine from pyruvate: step 3/4. In terms of biological role, functions in the biosynthesis of branched-chain amino acids. Catalyzes the dehydration of (2R,3R)-2,3-dihydroxy-3-methylpentanoate (2,3-dihydroxy-3-methylvalerate) into 2-oxo-3-methylpentanoate (2-oxo-3-methylvalerate) and of (2R)-2,3-dihydroxy-3-methylbutanoate (2,3-dihydroxyisovalerate) into 2-oxo-3-methylbutanoate (2-oxoisovalerate), the penultimate precursor to L-isoleucine and L-valine, respectively. In Nitrosomonas eutropha (strain DSM 101675 / C91 / Nm57), this protein is Dihydroxy-acid dehydratase.